Here is a 465-residue protein sequence, read N- to C-terminus: ATP-dependent rRNA helicase rrp3 (465 aa).

Over residues 1–22 the composition is skewed to basic and acidic residues; that stretch reads MAPSEKKLTEDKKNSSLNKKIE. Positions 1–44 are disordered; sequence MAPSEKKLTEDKKNSSLNKKIETSNSSSEKSSENNNGDSQNNEA. Positions 23-36 are enriched in low complexity; the sequence is TSNSSSEKSSENNN. Residues 46–74 carry the Q motif motif; sequence KTFKELGVIDELCEACEKLGFKTPTPIQQ. One can recognise a Helicase ATP-binding domain in the interval 77-248; the sequence is IPVVLNKRDV…RASLHQPVRV (172 aa). ATP is bound at residue 90–97; that stretch reads AQTGSGKT. The DEAD box signature appears at 196-199; sequence DEAD. Residues 275 to 419 form the Helicase C-terminal domain; sequence YLVYLVNELA…EYEIDKEGVF (145 aa). Over residues 442–453 the composition is skewed to basic residues; the sequence is RRKSKGKLHTKR. Residues 442–465 form a disordered region; that stretch reads RRKSKGKLHTKRKRDDLDREEQIY. Over residues 454–465 the composition is skewed to basic and acidic residues; the sequence is KRDDLDREEQIY.

The protein belongs to the DEAD box helicase family. DDX47/RRP3 subfamily. In terms of assembly, interacts with the SSU processome.

It localises to the nucleus. The enzyme catalyses ATP + H2O = ADP + phosphate + H(+). In terms of biological role, ATP-dependent rRNA helicase required for pre-ribosomal RNA processing. Involved in the maturation of the 35S-pre-rRNA and to its cleavage to mature 18S rRNA. The protein is ATP-dependent rRNA helicase rrp3 of Schizosaccharomyces pombe (strain 972 / ATCC 24843) (Fission yeast).